Consider the following 422-residue polypeptide: Adenylosuccinate synthetase (422 aa).

Residues 11–17 and 39–41 contribute to the GTP site; these read GDEGKGK and GHT. Catalysis depends on aspartate 12, which acts as the Proton acceptor. Mg(2+) is bound by residues aspartate 12 and glycine 39. IMP is bound by residues 12–15, 37–40, threonine 129, arginine 143, asparagine 219, threonine 234, and arginine 298; these read DEGK and NAGH. The active-site Proton donor is the histidine 40. Residue 294–300 coordinates substrate; sequence VTTGRRR. GTP contacts are provided by residues arginine 300, 326–328, and 409–411; these read KLD and GTG.

Belongs to the adenylosuccinate synthetase family. As to quaternary structure, homodimer. The cofactor is Mg(2+).

The protein resides in the cytoplasm. It carries out the reaction IMP + L-aspartate + GTP = N(6)-(1,2-dicarboxyethyl)-AMP + GDP + phosphate + 2 H(+). Its pathway is purine metabolism; AMP biosynthesis via de novo pathway; AMP from IMP: step 1/2. Plays an important role in the de novo pathway and in the salvage pathway of purine nucleotide biosynthesis. Catalyzes the first committed step in the biosynthesis of AMP from IMP. The protein is Adenylosuccinate synthetase of Ajellomyces capsulatus (strain H143) (Darling's disease fungus).